The primary structure comprises 423 residues: Enolase (423 aa).

Gln166 contributes to the (2R)-2-phosphoglycerate binding site. Glu208 acts as the Proton donor in catalysis. The Mg(2+) site is built by Asp242, Glu283, and Asp310. 4 residues coordinate (2R)-2-phosphoglycerate: Lys335, Arg364, Ser365, and Lys386. The Proton acceptor role is filled by Lys335.

The protein belongs to the enolase family. Mg(2+) serves as cofactor.

Its subcellular location is the cytoplasm. The protein localises to the secreted. It is found in the cell surface. It carries out the reaction (2R)-2-phosphoglycerate = phosphoenolpyruvate + H2O. It functions in the pathway carbohydrate degradation; glycolysis; pyruvate from D-glyceraldehyde 3-phosphate: step 4/5. Catalyzes the reversible conversion of 2-phosphoglycerate (2-PG) into phosphoenolpyruvate (PEP). It is essential for the degradation of carbohydrates via glycolysis. This chain is Enolase, found in Elusimicrobium minutum (strain Pei191).